The chain runs to 202 residues: Adapter protein MecA 2 (202 aa).

It belongs to the MecA family. As to quaternary structure, homodimer.

Its function is as follows. Enables the recognition and targeting of unfolded and aggregated proteins to the ClpC protease or to other proteins involved in proteolysis. Acts negatively in the development of competence by binding ComK and recruiting it to the ClpCP protease. When overexpressed, inhibits sporulation. Also involved in Spx degradation by ClpC. This is Adapter protein MecA 2 (mecA2) from Bacillus cereus (strain ATCC 14579 / DSM 31 / CCUG 7414 / JCM 2152 / NBRC 15305 / NCIMB 9373 / NCTC 2599 / NRRL B-3711).